The primary structure comprises 127 residues: Large ribosomal subunit protein eL8 (127 aa).

Belongs to the eukaryotic ribosomal protein eL8 family. As to quaternary structure, part of the 50S ribosomal subunit. Probably part of the RNase P complex.

The protein resides in the cytoplasm. In terms of biological role, multifunctional RNA-binding protein that recognizes the K-turn motif in ribosomal RNA, the RNA component of RNase P, box H/ACA, box C/D and box C'/D' sRNAs. The protein is Large ribosomal subunit protein eL8 of Saccharolobus islandicus (strain Y.N.15.51 / Yellowstone #2) (Sulfolobus islandicus).